We begin with the raw amino-acid sequence, 650 residues long: MAQQTQVTEEQARALAEESRESGWDKPSFAKELFLGRFPLGLIHPFPKPSDAEEARTEAFLVKLREFLDTVDGSVIERAAQIPDEYVKGLAELGCFGLKIPSEYGGLNMSQVAYNRVLMMVTTVHSSLGALLSAHQSIGVPEPLKLAGTAEQKRRFLPRCAAGAISAFLLTEPDVGSDPARMASTATPIDDGQAYELEGVKLWTTNGVVADLLVVMARVPRSEGHRGGISAFVVEADSPGITVERRNKFMGLRGIENGVTRLHRVRVPKDNLIGREGDGLKIALTTLNAGRLSLPAIATGVAKQALKIAREWSVERVQWGKPVGQHEAVASKISFIAATNYALDAVVELSSQMADEGRNDIRIEAALAKLWSSEMACLVGDELLQIRGGRGYETAESLAARGERAVPVEQMVRDLRINRIFEGSSEIMRLLIAREAVDAHLTAAGDLANPKADLRQKAAAAAGASGFYAKWLPKLVFGEGQLPTTYREFGALATHLRFVERSSRKLARNTFYGMARWQASLEKKQGFLGRIVDIGAELFAISAACVRAEAQRTADPVEGEQAYELAEAFCQQATLRVEALFDALWSNTDSIDVRLANDVLEGRYTWLEQGILDQSEGTGPWIASWEPGPSTEANLARRFLTVSPSSEAKL.

The tract at residues 1–23 (MAQQTQVTEEQARALAEESRESG) is disordered. The segment covering 10-23 (EQARALAEESRESG) has biased composition (basic and acidic residues). The Proton acceptor role is filled by Glu-422.

The protein belongs to the acyl-CoA dehydrogenase family. FAD is required as a cofactor.

It catalyses the reaction a 2,3-saturated acyl-CoA + A = a 2,3-dehydroacyl-CoA + AH2. The protein is Probable acyl-CoA dehydrogenase FadE10 (fadE10) of Mycobacterium tuberculosis (strain CDC 1551 / Oshkosh).